We begin with the raw amino-acid sequence, 577 residues long: Double-stranded RNA-binding protein Staufen homolog 1 (577 aa).

An N-acetylserine modification is found at Ser-2. The segment covering 34 to 44 has biased composition (polar residues); that stretch reads SIPSTTSSLPS. Residues 34 to 55 form a disordered region; sequence SIPSTTSSLPSENAGRPIQNSA. The 91-residue stretch at 72-162 folds into the DRBM 1 domain; the sequence is TPTVELNALC…AAKALRILQN (91 aa). An Asymmetric dimethylarginine modification is found at Arg-108. Arg-115 carries the asymmetric dimethylarginine; alternate modification. The residue at position 115 (Arg-115) is an Omega-N-methylarginine; alternate. A Phosphoserine modification is found at Ser-176. One can recognise a DRBM 2 domain in the interval 184–251; that stretch reads SEISQVFEIA…AIAVLEELKK (68 aa). At Ser-278 the chain carries Phosphoserine. A DRBM 3 domain is found at 286 to 354; it reads NPISRLAQIQ…AENMLEILGF (69 aa). The segment at 360–397 is disordered; that stretch reads QPTKPALKSEEKTPIKKPGDGRKVTFFEPGSGDENGTS. Residues 366 to 384 are compositionally biased toward basic and acidic residues; that stretch reads LKSEEKTPIKKPGDGRKVT. A Phosphoserine modification is found at Ser-390.

In terms of assembly, binds tubulin. Binds with low affinity single-stranded RNA or DNA homopolymers. Interacts with CASC3 in an RNA-dependent manner. Identified in a mRNP complex, at least composed of DHX9, DDX3X, ELAVL1, HNRNPU, IGF2BP1, ILF3, PABPC1, PCBP2, PTBP2, STAU1, STAU2, SYNCRIP and YBX1. As to quaternary structure, (Microbial infection) Interacts with HERV-K rec and gag proteins. (Microbial infection) Interacts with HIV-1 GAG polyprotein. In terms of assembly, (Microbial infection) Interacts with influenza virus NS1 protein. As to quaternary structure, (Microbial infection) Interacts with Ebola virus NP, VP30 and VP35. In terms of tissue distribution, widely expressed. Expressed in brain, pancreas, heart, skeletal muscles, liver, lung, kidney and placenta.

It localises to the cytoplasm. The protein resides in the rough endoplasmic reticulum. Functionally, binds double-stranded RNA (regardless of the sequence) and tubulin. May play a role in specific positioning of mRNAs at given sites in the cell by cross-linking cytoskeletal and RNA components, and in stimulating their translation at the site. (Microbial infection) Plays a role in virus particles production of many viruses including of HIV-1, HERV-K, ebola virus and influenza virus. Acts by interacting with various viral proteins involved in particle budding process. This Homo sapiens (Human) protein is Double-stranded RNA-binding protein Staufen homolog 1 (STAU1).